The sequence spans 452 residues: FAD-linked oxidoreductase DDB_G0289697 (452 aa).

Positions 44–212 (VVNTPLLIVY…TDFTFKLHPV (169 aa)) constitute an FAD-binding PCMH-type domain. Pros-8alpha-FAD histidine is present on His81.

The protein belongs to the oxygen-dependent FAD-linked oxidoreductase family. The cofactor is FAD.

This Dictyostelium discoideum (Social amoeba) protein is FAD-linked oxidoreductase DDB_G0289697.